We begin with the raw amino-acid sequence, 682 residues long: Serine/threonine-protein kinase PLK2 (682 aa).

Residues 25–67 form a disordered region; that stretch reads ACGGDSKKKRPQQPSEDGQPQAQVTPAAPHHHHHHSHSGPEIS. Residues 36 to 48 are compositionally biased toward polar residues; the sequence is QQPSEDGQPQAQV. The 253-residue stretch at 79 to 331 folds into the Protein kinase domain; it reads YCRGKVLGKG…LDDIIRHDFF (253 aa). Residues 85–93 and lysine 108 each bind ATP; that span reads LGKGGFAKC. Aspartate 202 (proton acceptor) is an active-site residue. Threonine 236 carries the post-translational modification Phosphothreonine. The tract at residues 403-432 is disordered; that stretch reads SITQQPSKHRADEEPQPPPTTVARSGTSAV. POLO box domains follow at residues 500-578 and 598-682; these read WVTK…YMEE and YLLQ…QRCN.

Belongs to the protein kinase superfamily. Ser/Thr protein kinase family. CDC5/Polo subfamily. Interacts with NSF; causing NSF dissociation from GRIA2. Interacts with CIB1. In terms of processing, catalytic activity is enhanced by phosphorylation of Thr-236. In terms of tissue distribution, brain, lung and heart.

It localises to the cytoplasm. Its subcellular location is the cytoskeleton. The protein resides in the microtubule organizing center. The protein localises to the centrosome. It is found in the centriole. It localises to the cell projection. Its subcellular location is the dendrite. It catalyses the reaction L-seryl-[protein] + ATP = O-phospho-L-seryl-[protein] + ADP + H(+). The enzyme catalyses L-threonyl-[protein] + ATP = O-phospho-L-threonyl-[protein] + ADP + H(+). Its activity is regulated as follows. Activated by phosphorylation of Thr-236. Once activated, activity is stimulated by binding target proteins. Its function is as follows. Tumor suppressor serine/threonine-protein kinase involved in synaptic plasticity, centriole duplication and G1/S phase transition. Polo-like kinases act by binding and phosphorylating proteins that are already phosphorylated on a specific motif recognized by the POLO box domains. Phosphorylates CPAP, NPM1, RAPGEF2, RASGRF1, SNCA, SIPA1L1 and SYNGAP1. Plays a key role in synaptic plasticity and memory by regulating the Ras and Rap protein signaling: required for overactivity-dependent spine remodeling by phosphorylating the Ras activator RASGRF1 and the Rap inhibitor SIPA1L1 leading to their degradation by the proteasome. Conversely, phosphorylates the Rap activator RAPGEF2 and the Ras inhibitor SYNGAP1, promoting their activity. Also regulates synaptic plasticity independently of kinase activity, via its interaction with NSF that disrupts the interaction between NSF and the GRIA2 subunit of AMPARs, leading to a rapid rundown of AMPAR-mediated current that occludes long term depression. Required for procentriole formation and centriole duplication by phosphorylating CPAP and NPM1, respectively. Its induction by p53/TP53 suggests that it may participate in the mitotic checkpoint following stress. The polypeptide is Serine/threonine-protein kinase PLK2 (Plk2) (Mus musculus (Mouse)).